The primary structure comprises 424 residues: 3-phosphoshikimate 1-carboxyvinyltransferase (424 aa).

3-phosphoshikimate is bound by residues Lys21, Ser22, and Arg26. Residue Lys21 participates in phosphoenolpyruvate binding. The phosphoenolpyruvate site is built by Gly92 and Arg120. 3-phosphoshikimate is bound by residues Ser163, Ser164, Gln165, Ser191, Asp306, and Lys333. Gln165 is a phosphoenolpyruvate binding site. Catalysis depends on Asp306, which acts as the Proton acceptor. Arg337, Arg379, and Lys405 together coordinate phosphoenolpyruvate.

It belongs to the EPSP synthase family. In terms of assembly, monomer.

The protein localises to the cytoplasm. The enzyme catalyses 3-phosphoshikimate + phosphoenolpyruvate = 5-O-(1-carboxyvinyl)-3-phosphoshikimate + phosphate. Its pathway is metabolic intermediate biosynthesis; chorismate biosynthesis; chorismate from D-erythrose 4-phosphate and phosphoenolpyruvate: step 6/7. In terms of biological role, catalyzes the transfer of the enolpyruvyl moiety of phosphoenolpyruvate (PEP) to the 5-hydroxyl of shikimate-3-phosphate (S3P) to produce enolpyruvyl shikimate-3-phosphate and inorganic phosphate. The polypeptide is 3-phosphoshikimate 1-carboxyvinyltransferase (Clostridium perfringens (strain 13 / Type A)).